The sequence spans 373 residues: tRNA-specific 2-thiouridylase MnmA (373 aa).

ATP-binding positions include 12–19 (GMSGGVDS) and M38. Residues 98–100 (NPD) form an interaction with target base in tRNA region. C103 (nucleophile) is an active-site residue. Residues C103 and C200 are joined by a disulfide bond. G127 lines the ATP pocket. An interaction with tRNA region spans residues 150–152 (KDQ). C200 functions as the Cysteine persulfide intermediate in the catalytic mechanism. The interaction with tRNA stretch occupies residues 312–313 (RY).

This sequence belongs to the MnmA/TRMU family.

It localises to the cytoplasm. It carries out the reaction S-sulfanyl-L-cysteinyl-[protein] + uridine(34) in tRNA + AH2 + ATP = 2-thiouridine(34) in tRNA + L-cysteinyl-[protein] + A + AMP + diphosphate + H(+). Functionally, catalyzes the 2-thiolation of uridine at the wobble position (U34) of tRNA, leading to the formation of s(2)U34. The chain is tRNA-specific 2-thiouridylase MnmA from Streptococcus pneumoniae (strain P1031).